The chain runs to 173 residues: uncharacterized protein (173 aa).

The signal sequence occupies residues 1–20 (MWYKVLGIVSLCSVYVSTQG). A glycan (N-linked (GlcNAc...) asparagine) is linked at N53.

In terms of tissue distribution, component of the acid-insoluble organic matrix of calcified shell layers (at protein level).

The protein resides in the secreted. This is an uncharacterized protein from Haliotis asinina (Donkey's ear abalone).